The primary structure comprises 761 residues: Disintegrin and metalloproteinase domain-containing protein 24 (761 aa).

An N-terminal signal peptide occupies residues 1-34 (MVAMSEALVHARITLLQAWLRMLLFSSVWPPTWC). Positions 35–200 (AEYKGPPETV…GKSTRMQSIY (166 aa)) are excised as a propeptide. Residues 35-697 (AEYKGPPETV…SKKDAPEKPN (663 aa)) are Extracellular-facing. N-linked (GlcNAc...) asparagine glycosylation occurs at Asn-140. The Cysteine switch signature appears at 172–179 (MRCGLTDE). Cys-174 lines the Zn(2+) pocket. The region spanning 208–400 (LYIKLALVID…KSCIHREPRP (193 aa)) is the Peptidase M12B domain. Residues Asn-227 and Asn-301 are each glycosylated (N-linked (GlcNAc...) asparagine). 7 disulfides stabilise this stretch: Cys-323/Cys-393, Cys-357/Cys-379, Cys-359/Cys-364, Cys-465/Cys-485, Cys-635/Cys-646, Cys-640/Cys-652, and Cys-654/Cys-663. Residue His-342 coordinates Zn(2+). Glu-343 is a catalytic residue. Zn(2+) contacts are provided by His-346 and His-352. N-linked (GlcNAc...) asparagine glycans are attached at residues Asn-378, Asn-390, and Asn-479. Residues 406–493 (LKVCGNGIVE…ECPEDLFVQD (88 aa)) form the Disintegrin domain. Residues 631 to 664 (WVNDCTPETCNMKGVCNNKQHCHCDVGWSPPNCQ) form the EGF-like domain. A helical transmembrane segment spans residues 698–718 (VIIWLLPIICVAVVLSVLFCL). Over 719-761 (SGATKKSREAAASQPAEERVKPPYEGAEPSYETVKPPDEWANP) the chain is Cytoplasmic. Positions 725 to 761 (SREAAASQPAEERVKPPYEGAEPSYETVKPPDEWANP) are disordered.

In terms of assembly, monomer. Requires Zn(2+) as cofactor. In terms of processing, the prodomain is removed during sperm passage through the caput epididymis after the protein has reached the cell surface. Not processed in the secretory pathway. As to expression, expressed exclusively in testis and more specifically on the surface of mature sperm (at protein level).

It localises to the membrane. Functionally, plasma membrane protease present on mature sperm that may be involved in sperm function during epididymal maturation and/or fertilization. The polypeptide is Disintegrin and metalloproteinase domain-containing protein 24 (Mus musculus (Mouse)).